A 102-amino-acid chain; its full sequence is Co-chaperonin GroES (102 aa).

This sequence belongs to the GroES chaperonin family. As to quaternary structure, heptamer of 7 subunits arranged in a ring. Interacts with the chaperonin GroEL.

The protein resides in the cytoplasm. In terms of biological role, together with the chaperonin GroEL, plays an essential role in assisting protein folding. The GroEL-GroES system forms a nano-cage that allows encapsulation of the non-native substrate proteins and provides a physical environment optimized to promote and accelerate protein folding. GroES binds to the apical surface of the GroEL ring, thereby capping the opening of the GroEL channel. The protein is Co-chaperonin GroES of Chlamydia caviae (strain ATCC VR-813 / DSM 19441 / 03DC25 / GPIC) (Chlamydophila caviae).